The primary structure comprises 268 residues: Small ribosomal subunit protein uS3 (268 aa).

One can recognise a KH type-2 domain in the interval 39–107 (VREYLKKKLK…PVHVNIEEIR (69 aa)). A disordered region spans residues 216-268 (VEEVAEEKRPRRNARPGGDRRPRRDGEGGGPAGARRGAPRRAGGAGGDGKTGE). Over residues 232 to 242 (GGDRRPRRDGE) the composition is skewed to basic and acidic residues. Residues 248 to 257 (GARRGAPRRA) are compositionally biased toward low complexity. Residues 258-268 (GGAGGDGKTGE) show a composition bias toward gly residues.

This sequence belongs to the universal ribosomal protein uS3 family. Part of the 30S ribosomal subunit. Forms a tight complex with proteins S10 and S14.

Its function is as follows. Binds the lower part of the 30S subunit head. Binds mRNA in the 70S ribosome, positioning it for translation. The protein is Small ribosomal subunit protein uS3 of Paraburkholderia phytofirmans (strain DSM 17436 / LMG 22146 / PsJN) (Burkholderia phytofirmans).